A 447-amino-acid chain; its full sequence is tRNA-2-methylthio-N(6)-dimethylallyladenosine synthase (447 aa).

Residues 10 to 128 enclose the MTTase N-terminal domain; sequence KLFCISTYGC…FPEYLHRVLQ (119 aa). 6 residues coordinate [4Fe-4S] cluster: C19, C55, C89, C165, C169, and C172. In terms of domain architecture, Radical SAM core spans 151–382; sequence RKSDVKAFVT…EAINKKVVIK (232 aa). In terms of domain architecture, TRAM spans 384 to 447; it reads KEYEGKVVEV…PFSLIGEIVE (64 aa).

This sequence belongs to the methylthiotransferase family. MiaB subfamily. Monomer. It depends on [4Fe-4S] cluster as a cofactor.

It localises to the cytoplasm. The enzyme catalyses N(6)-dimethylallyladenosine(37) in tRNA + (sulfur carrier)-SH + AH2 + 2 S-adenosyl-L-methionine = 2-methylsulfanyl-N(6)-dimethylallyladenosine(37) in tRNA + (sulfur carrier)-H + 5'-deoxyadenosine + L-methionine + A + S-adenosyl-L-homocysteine + 2 H(+). In terms of biological role, catalyzes the methylthiolation of N6-(dimethylallyl)adenosine (i(6)A), leading to the formation of 2-methylthio-N6-(dimethylallyl)adenosine (ms(2)i(6)A) at position 37 in tRNAs that read codons beginning with uridine. The protein is tRNA-2-methylthio-N(6)-dimethylallyladenosine synthase of Clostridium perfringens (strain ATCC 13124 / DSM 756 / JCM 1290 / NCIMB 6125 / NCTC 8237 / Type A).